A 213-amino-acid polypeptide reads, in one-letter code: MDLTDTQQAILALIAERIDADGVPPSQTEIARAFGFKGVRAAQYHLEALEQAGAIRRVPGQARGIRLAGQGGQTRAAAVSEPVRDDVLRLPVLGRVAAGLPIGADIGSDDFVVLDRVFFSPSPDYLLKVQGDSMRDEGIFNGDLIGVHRTRDARSGQIVVARIDEEITVKLLKIGKDRIRLLPRNPDYAPIEVLPDQDFAIEGLYCGLLRPNR.

The H-T-H motif DNA-binding region spans 27–47 (QTEIARAFGFKGVRAAQYHLE). Catalysis depends on for autocatalytic cleavage activity residues serine 133 and lysine 170.

Belongs to the peptidase S24 family. Homodimer.

The catalysed reaction is Hydrolysis of Ala-|-Gly bond in repressor LexA.. Its function is as follows. Represses a number of genes involved in the response to DNA damage (SOS response), including recA and lexA. In the presence of single-stranded DNA, RecA interacts with LexA causing an autocatalytic cleavage which disrupts the DNA-binding part of LexA, leading to derepression of the SOS regulon and eventually DNA repair. This is LexA repressor 2 from Xanthomonas oryzae pv. oryzae (strain KACC10331 / KXO85).